The primary structure comprises 1149 residues: Nitric oxide synthase, inducible (1149 aa).

The tract at residues lysine 22–histidine 83 is disordered. Positions aspartate 23–asparagine 27 match the DINNN-motif; mediates interaction with SPSB1, SPSB2 and SPSB4 motif. Residues lysine 50 to glycine 61 show a composition bias toward polar residues. Positions 109 and 114 each coordinate Zn(2+). Residue serine 117 participates in (6R)-L-erythro-5,6,7,8-tetrahydrobiopterin binding. Cysteine 199 provides a ligand contact to heme b. Residues glutamine 262, tryptophan 371, tyrosine 372, and glutamate 376 each coordinate L-arginine. (6R)-L-erythro-5,6,7,8-tetrahydrobiopterin-binding residues include arginine 380, isoleucine 461, tryptophan 462, and phenylalanine 475. Tyrosine 490 is a binding site for heme b. Residues phenylalanine 514–serine 534 form a calmodulin-binding region. Residues alanine 538–phenylalanine 676 enclose the Flavodoxin-like domain. Threonine 544, glutamate 545, threonine 546, lysine 548, and serine 549 together coordinate FMN. Tyrosine 574 carries the phosphotyrosine modification. Serine 590, threonine 591, serine 627, arginine 632, cysteine 634, glutamate 660, and glutamine 664 together coordinate FMN. Residues threonine 729–proline 969 form the FAD-binding FR-type domain. Position 749 (arginine 749) interacts with NADP(+). The FAD site is built by histidine 771, arginine 905, tyrosine 907, serine 908, threonine 923, and alanine 925. NADP(+) is bound at residue threonine 928. FAD contacts are provided by tyrosine 929, valine 942, cysteine 943, and serine 944. Residues threonine 983, arginine 1016, serine 1045, arginine 1046, lysine 1052, tyrosine 1054, glutamine 1056, and aspartate 1089 each coordinate NADP(+).

It belongs to the NOS family. Homodimer. Interacts with NHERF1. Interacts with GAPDH; induced by oxidatively-modified low-densitity lipoprotein (LDL(ox)). Interacts with S100A8 and S100A9 to form the iNOS-S100A8/9 transnitrosylase complex. Interacts with SPSB1, SPSB2 and SPSB4. Interacts with ELOC and CUL5 in the presence of SPSB1 or SPSB2 or SPSB4. Forms a complex with ASL, ASS1 and HSP90AA1; the complex regulates cell-autonomous L-arginine synthesis and citrulline recycling while channeling extracellular L-arginine to nitric oxide synthesis pathway. Requires heme b as cofactor. FAD is required as a cofactor. The cofactor is FMN. (6R)-L-erythro-5,6,7,8-tetrahydrobiopterin serves as cofactor. Post-translationally, polyubiquitinated; mediated by SPSB1, SPSB2 and SPSB4, leading to proteasomal degradation. As to expression, expressed in the lung and colon. Not detected in the heart, aorta, liver, kidney, and spleen.

The protein localises to the cytoplasm. It localises to the cytosol. It carries out the reaction 2 L-arginine + 3 NADPH + 4 O2 + H(+) = 2 L-citrulline + 2 nitric oxide + 3 NADP(+) + 4 H2O. Regulated by calcium/calmodulin. In terms of biological role, produces nitric oxide (NO) which is a messenger molecule with diverse functions throughout the body. In macrophages, NO mediates tumoricidal and bactericidal actions. Also has nitrosylase activity and mediates cysteine S-nitrosylation of cytoplasmic target proteins such PTGS2/COX2. As component of the iNOS-S100A8/9 transnitrosylase complex involved in the selective inflammatory stimulus-dependent S-nitrosylation of GAPDH implicated in regulation of the GAIT complex activity and probably multiple targets including ANXA5, EZR, MSN and VIM. Involved in inflammation, enhances the synthesis of pro-inflammatory mediators such as IL6 and IL8. This chain is Nitric oxide synthase, inducible (NOS2), found in Cavia porcellus (Guinea pig).